The sequence spans 355 residues: D-alanine--D-alanine ligase (355 aa).

The region spanning 143–350 (KKIFSHLEIP…IDQLVAKLVD (208 aa)) is the ATP-grasp domain. Position 178-233 (178-233 (IEKLKLPVFVKPANSGSSLGISKAKTRSEIIKALQKAWEIDSRIVIEEGLDVRELE)) interacts with ATP. The Mg(2+) site is built by aspartate 303, glutamate 317, and asparagine 319.

Belongs to the D-alanine--D-alanine ligase family. It depends on Mg(2+) as a cofactor. Mn(2+) is required as a cofactor.

The protein resides in the cytoplasm. The enzyme catalyses 2 D-alanine + ATP = D-alanyl-D-alanine + ADP + phosphate + H(+). The protein operates within cell wall biogenesis; peptidoglycan biosynthesis. Functionally, cell wall formation. This chain is D-alanine--D-alanine ligase, found in Prochlorococcus marinus subsp. pastoris (strain CCMP1986 / NIES-2087 / MED4).